Reading from the N-terminus, the 419-residue chain is uncharacterized protein (419 aa).

One can recognise an Obg domain in the interval 29–236 (PKFQDKIRIR…KLIELELKTI (208 aa)). An OBG-type G domain is found at 237 to 414 (CEIGLVGLPN…LVRGMTQLLQ (178 aa)). GTP is bound by residues 243-250 (GLPNAGKS), 295-299 (DIPGI), and 364-367 (ANKA).

It belongs to the TRAFAC class OBG-HflX-like GTPase superfamily. OBG GTPase family.

It is found in the mitochondrion. This is an uncharacterized protein from Schizosaccharomyces pombe (strain 972 / ATCC 24843) (Fission yeast).